Reading from the N-terminus, the 308-residue chain is MLQMIPARPSRALASLSEAYEECRQITARYAKTFYLGTLLMPEAKRQAIWAIYVWCRRTDELVDGPQAAQTNFATLDAWERRLERLFAGEPEDDCDVALVDTLARYPLDIQPFRDMIEGQRMDLLQNRYSTFEDLYTYCYRVAGTVGLMSQPVMGIESTNSRAPWDPTTPPDPTQEALALGIANQLTNILRDVGEDARRGRIYLPQEELAQFNYSEQDLFNGVIDDRWRAFMQFQLDRARDYFEQAERGIRQLSHDARWPVWASLMLYREILDVIEQNNYDVFRKRAYVPTWRKLCSLPVAMLRATVL.

The protein belongs to the phytoene/squalene synthase family. Requires ATP as cofactor. It depends on Mn(2+) as a cofactor. The cofactor is Mg(2+).

It carries out the reaction 2 (2E,6E,10E)-geranylgeranyl diphosphate = 15-cis-phytoene + 2 diphosphate. Its pathway is carotenoid biosynthesis; phytoene biosynthesis. Functionally, involved in the biosynthesis of carotenoids. Catalyzes the condensation of two molecules of geranylgeranyl diphosphate (GGPP) to give prephytoene diphosphate (PPPP) and the subsequent rearrangement of the cyclopropylcarbinyl intermediate to yield 15-cis-phytoene. The polypeptide is 15-cis-phytoene synthase (crtB) (Synechococcus elongatus (strain ATCC 33912 / PCC 7942 / FACHB-805) (Anacystis nidulans R2)).